The primary structure comprises 50 residues: Large ribosomal subunit protein bL33 (50 aa).

This sequence belongs to the bacterial ribosomal protein bL33 family.

This is Large ribosomal subunit protein bL33 from Sulfurimonas denitrificans (strain ATCC 33889 / DSM 1251) (Thiomicrospira denitrificans (strain ATCC 33889 / DSM 1251)).